Reading from the N-terminus, the 92-residue chain is Evasin P942 (92 aa).

The N-terminal stretch at 1-26 (MEVKTFAFLQIAVLIALGLHLAPAGS) is a signal peptide. Cystine bridges form between C44/C63, C48/C65, and C59/C76. N47 carries an N-linked (GlcNAc...) asparagine glycan. N70 is a glycosylation site (N-linked (GlcNAc...) asparagine).

The protein resides in the secreted. In terms of biological role, salivary chemokine-binding protein which binds to host chemokines CXCL1, CXCL2, CXCL3, CXCL4, CXCL5, CXCL6, CXCL10, CXCL11 and CXCL13. The polypeptide is Evasin P942 (Ixodes ricinus (Common tick)).